The following is a 623-amino-acid chain: uncharacterized protein (623 aa).

A coiled-coil region spans residues 256-351; it reads AEEKLLSKNK…EEIHGLKKKN (96 aa). 2 disordered regions span residues 417-485 and 497-536; these read NRRN…SPSS and ALSS…ECAT. Polar residues predominate over residues 422–431; sequence LESVPFNTLS. Positions 452 to 481 are enriched in basic and acidic residues; that stretch reads ELKKPAESYGDETKKPNQHNKDGSIDEKPK.

This is an uncharacterized protein from Arabidopsis thaliana (Mouse-ear cress).